We begin with the raw amino-acid sequence, 250 residues long: Ubiquinone/menaquinone biosynthesis C-methyltransferase UbiE (250 aa).

S-adenosyl-L-methionine-binding positions include T73, D94, 122 to 123, and S139; that span reads NA.

The protein belongs to the class I-like SAM-binding methyltransferase superfamily. MenG/UbiE family.

The enzyme catalyses a 2-demethylmenaquinol + S-adenosyl-L-methionine = a menaquinol + S-adenosyl-L-homocysteine + H(+). It catalyses the reaction a 2-methoxy-6-(all-trans-polyprenyl)benzene-1,4-diol + S-adenosyl-L-methionine = a 5-methoxy-2-methyl-3-(all-trans-polyprenyl)benzene-1,4-diol + S-adenosyl-L-homocysteine + H(+). The protein operates within quinol/quinone metabolism; menaquinone biosynthesis; menaquinol from 1,4-dihydroxy-2-naphthoate: step 2/2. It participates in cofactor biosynthesis; ubiquinone biosynthesis. Methyltransferase required for the conversion of demethylmenaquinol (DMKH2) to menaquinol (MKH2) and the conversion of 2-polyprenyl-6-methoxy-1,4-benzoquinol (DDMQH2) to 2-polyprenyl-3-methyl-6-methoxy-1,4-benzoquinol (DMQH2). The sequence is that of Ubiquinone/menaquinone biosynthesis C-methyltransferase UbiE from Francisella philomiragia subsp. philomiragia (strain ATCC 25017 / CCUG 19701 / FSC 153 / O#319-036).